The following is a 1274-amino-acid chain: DENN domain-containing protein 5B (1274 aa).

S2 is subject to N-acetylserine. In terms of domain architecture, uDENN spans 39–244 (DELAGENFDQ…EVPLPPPGRS (206 aa)). S49 and S178 each carry phosphoserine. The cDENN domain occupies 263–399 (ELPLSDYPLR…VDFIQELSEV (137 aa)). Residues 401–581 (LQFGIPPEGS…DNKIMSQWEE (181 aa)) form the dDENN domain. The RUN 1 domain occupies 772 to 932 (LEENTLIASL…DYFCFTSVFT (161 aa)). S822 carries the post-translational modification Phosphoserine. A helical transmembrane segment spans residues 916–936 (LLSLNAVDYFCFTSVFTTIMI). One can recognise a PLAT domain in the interval 936–1044 (IPYRSVIIPI…DDGSLERILI (109 aa)). T1062 is modified (phosphothreonine). Phosphoserine is present on residues S1068, S1076, and S1079. The RUN 2 domain maps to 1118–1267 (TVLLCGENGL…QDFTIVLEGS (150 aa)).

This sequence belongs to the RAB6IP1 family.

The protein localises to the membrane. Guanine nucleotide exchange factor (GEF) which may activate RAB39A and/or RAB39B. Promotes the exchange of GDP to GTP, converting inactive GDP-bound Rab proteins into their active GTP-bound form. The protein is DENN domain-containing protein 5B (Dennd5b) of Mus musculus (Mouse).